A 635-amino-acid polypeptide reads, in one-letter code: tRNA uridine 5-carboxymethylaminomethyl modification enzyme MnmG (635 aa).

19 to 24 (GAGHAG) contacts FAD. 280-294 (GPRYCPSIEDKIVRF) lines the NAD(+) pocket.

This sequence belongs to the MnmG family. Homodimer. Heterotetramer of two MnmE and two MnmG subunits. FAD is required as a cofactor.

It localises to the cytoplasm. Functionally, NAD-binding protein involved in the addition of a carboxymethylaminomethyl (cmnm) group at the wobble position (U34) of certain tRNAs, forming tRNA-cmnm(5)s(2)U34. This Synechocystis sp. (strain ATCC 27184 / PCC 6803 / Kazusa) protein is tRNA uridine 5-carboxymethylaminomethyl modification enzyme MnmG.